The chain runs to 316 residues: Ribosomal RNA small subunit methyltransferase H (316 aa).

S-adenosyl-L-methionine contacts are provided by residues 35 to 37 (AGH), D55, F84, D105, and Q112.

The protein belongs to the methyltransferase superfamily. RsmH family.

The protein localises to the cytoplasm. It catalyses the reaction cytidine(1402) in 16S rRNA + S-adenosyl-L-methionine = N(4)-methylcytidine(1402) in 16S rRNA + S-adenosyl-L-homocysteine + H(+). Specifically methylates the N4 position of cytidine in position 1402 (C1402) of 16S rRNA. The polypeptide is Ribosomal RNA small subunit methyltransferase H (Streptococcus pneumoniae (strain ATCC 700669 / Spain 23F-1)).